The sequence spans 492 residues: MQLQQEKKKLLYSLCDVCNIQLHSAAQAQVHYNGKSHLKRVKQLNNGEVPKASASLAPTSLQSLSSSSSQGSSCHSNTLPTLVRTPSLMMQSGLDMKPFMTFPVESSSPVGLFPNFNTMDPVQKAVINHTFGVSIPPKKKQVISCNICQLRFNSDSQAEAHYKGSKHAKKLKAQESPKNKQKSAVAQDSGTKTITSTSTNTTTTTTTTSSCTAVTASCSDQTEKSTEPLAAHKVPASPQAFVPAPVAPAVALVPSPCKTAPVHASPPTEPTGLAVALKNTSKPAALPTAPSEPSVESEEEKAKKLLYCSLCKVAVNSLSQLEAHNTGSKHKTMLEARNGAGPIKAYPRPGSKLKVQATQLNKGSGLQNKTFHCEICDVHVNSEIQLKQHISSRRHKDRVAGKPTKPKYSPYNKQQRSSSSLAAKLALQNDLVKPISPAFLPSPFSTTTVPSISLHPRPNTSIFQTASLPHSFLRAAPGPIRPTTGSILFAPY.

2 consecutive Matrin-type zinc fingers follow at residues 8-44 and 143-173; these read KKLL…VKQL and ISCN…KLKA. The segment at 159–206 is disordered; it reads EAHYKGSKHAKKLKAQESPKNKQKSAVAQDSGTKTITSTSTNTTTTTT. The segment covering 189-206 has biased composition (low complexity); the sequence is SGTKTITSTSTNTTTTTT. 2 Matrin-type zinc fingers span residues 303–337 and 371–401; these read KKLL…LEAR and FHCE…RVAG. The segment at 388 to 420 is disordered; sequence QHISSRRHKDRVAGKPTKPKYSPYNKQQRSSSS.

It localises to the nucleus. Functionally, may play a role in p53/TP53-mediated apoptosis. The sequence is that of Zinc finger protein 385B (znf385b) from Danio rerio (Zebrafish).